The chain runs to 286 residues: Phosphatidylserine decarboxylase proenzyme (286 aa).

Active-site charge relay system; for autoendoproteolytic cleavage activity residues include D90, H147, and S252. The active-site Schiff-base intermediate with substrate; via pyruvic acid; for decarboxylase activity is S252. The residue at position 252 (S252) is a Pyruvic acid (Ser); by autocatalysis.

This sequence belongs to the phosphatidylserine decarboxylase family. PSD-B subfamily. Prokaryotic type I sub-subfamily. As to quaternary structure, heterodimer of a large membrane-associated beta subunit and a small pyruvoyl-containing alpha subunit. The cofactor is pyruvate. Is synthesized initially as an inactive proenzyme. Formation of the active enzyme involves a self-maturation process in which the active site pyruvoyl group is generated from an internal serine residue via an autocatalytic post-translational modification. Two non-identical subunits are generated from the proenzyme in this reaction, and the pyruvate is formed at the N-terminus of the alpha chain, which is derived from the carboxyl end of the proenzyme. The autoendoproteolytic cleavage occurs by a canonical serine protease mechanism, in which the side chain hydroxyl group of the serine supplies its oxygen atom to form the C-terminus of the beta chain, while the remainder of the serine residue undergoes an oxidative deamination to produce ammonia and the pyruvoyl prosthetic group on the alpha chain. During this reaction, the Ser that is part of the protease active site of the proenzyme becomes the pyruvoyl prosthetic group, which constitutes an essential element of the active site of the mature decarboxylase.

The protein resides in the cell membrane. The enzyme catalyses a 1,2-diacyl-sn-glycero-3-phospho-L-serine + H(+) = a 1,2-diacyl-sn-glycero-3-phosphoethanolamine + CO2. Its pathway is phospholipid metabolism; phosphatidylethanolamine biosynthesis; phosphatidylethanolamine from CDP-diacylglycerol: step 2/2. Functionally, catalyzes the formation of phosphatidylethanolamine (PtdEtn) from phosphatidylserine (PtdSer). In Ectopseudomonas mendocina (strain ymp) (Pseudomonas mendocina), this protein is Phosphatidylserine decarboxylase proenzyme.